Consider the following 288-residue polypeptide: Bifunctional protein FolD (288 aa).

NADP(+) is bound by residues 163-165 (GRS), serine 188, and isoleucine 229.

It belongs to the tetrahydrofolate dehydrogenase/cyclohydrolase family. As to quaternary structure, homodimer.

The enzyme catalyses (6R)-5,10-methylene-5,6,7,8-tetrahydrofolate + NADP(+) = (6R)-5,10-methenyltetrahydrofolate + NADPH. It catalyses the reaction (6R)-5,10-methenyltetrahydrofolate + H2O = (6R)-10-formyltetrahydrofolate + H(+). Its pathway is one-carbon metabolism; tetrahydrofolate interconversion. In terms of biological role, catalyzes the oxidation of 5,10-methylenetetrahydrofolate to 5,10-methenyltetrahydrofolate and then the hydrolysis of 5,10-methenyltetrahydrofolate to 10-formyltetrahydrofolate. The polypeptide is Bifunctional protein FolD (Campylobacter curvus (strain 525.92)).